The following is a 471-amino-acid chain: Putative multidrug resistance protein MdtD (471 aa).

The Periplasmic segment spans residues 1 to 11 (MTDLPDSTRWQ). A helical transmembrane segment spans residues 12 to 32 (LWIVAFGFFMQSLDTTIVNTA). Residues 33–48 (LPSMAQSLGESPLHMH) lie on the Cytoplasmic side of the membrane. Residues 49–69 (MVIVSYVLTVAVMLPASGWLA) form a helical membrane-spanning segment. Over 70–76 (DKVGVRN) the chain is Periplasmic. Residues 77-97 (IFFTAIVLFTLGSLFCALSGT) traverse the membrane as a helical segment. Over 98 to 101 (LNEL) the chain is Cytoplasmic. The helical transmembrane segment at 102 to 124 (LLARALQGVGGAMMVPVGRLTVM) threads the bilayer. The Periplasmic portion of the chain corresponds to 125–137 (KIVPREQYMAAMT). The helical transmembrane segment at 138–158 (FVTLPGQVGPLLGPALGGLLV) threads the bilayer. At 159 to 164 (EYASWH) the chain is on the cytoplasmic side. The helical transmembrane segment at 165 to 185 (WIFLINIPVGIIGAIATLMLM) threads the bilayer. The Periplasmic portion of the chain corresponds to 186 to 196 (PNYTMQTRRFD). Residues 197-217 (LSGFLLLAVGMAVLTLALDGS) traverse the membrane as a helical segment. Residues 218–224 (KGTGLSP) are Cytoplasmic-facing. Residues 225–245 (LAIAGLVAVGVVALVLYLLHA) traverse the membrane as a helical segment. At 246 to 262 (RNNNRALFSLKLFRTRT) the chain is on the periplasmic side. Residues 263–283 (FSLGLAGSFAGRIGSGMLPFM) traverse the membrane as a helical segment. At 284-285 (TP) the chain is on the cytoplasmic side. The helical transmembrane segment at 286–306 (VFLQIGLGFSPFHAGLMMIPM) threads the bilayer. Residues 307–341 (VLGSMGMKRIVVQVVNRFGYRRVLVATTLGLSLVT) lie on the Periplasmic side of the membrane. The chain crosses the membrane as a helical span at residues 342-362 (LLFMTTALLGWYYVLPFVLFL). Residues 363–395 (QGMVNSTRFSSMNTLTLKDLPDNLASSGNSLLS) are Cytoplasmic-facing. A helical membrane pass occupies residues 396–416 (MIMQLSMSIGVTIAGLLLGLF). Over 417–430 (GSQHVSIDSGTTQT) the chain is Periplasmic. A helical membrane pass occupies residues 431–451 (VFMYTWLSMALIIALPAFIFA). Residues 452–471 (RVPNDTHQNVAISRRKRSAQ) lie on the Cytoplasmic side of the membrane.

It belongs to the major facilitator superfamily. TCR/Tet family.

The protein resides in the cell inner membrane. The protein is Putative multidrug resistance protein MdtD of Escherichia coli (strain 55989 / EAEC).